We begin with the raw amino-acid sequence, 354 residues long: Ornithine transcarbamylase, mitochondrial (354 aa).

Residues 1-32 (MLFNLRILLNNAAFRNGHNFMVRNFRCGQPLQ) constitute a mitochondrion transit peptide. Position 70 is an N6-acetyllysine; alternate (Lys-70). An N6-succinyllysine; alternate modification is found at Lys-70. The residue at position 80 (Lys-80) is an N6-succinyllysine. The residue at position 88 (Lys-88) is an N6-acetyllysine; alternate. Residue Lys-88 is modified to N6-succinyllysine; alternate. 90 to 93 (STRT) provides a ligand contact to carbamoyl phosphate. Ser-133 carries the phosphoserine modification. Position 141 (Arg-141) interacts with carbamoyl phosphate. Lys-144 is subject to N6-acetyllysine; alternate. Residue Lys-144 is modified to N6-succinyllysine; alternate. Residues His-168 and Gln-171 each contribute to the carbamoyl phosphate site. Residue Asn-199 coordinates L-ornithine. An N6-acetyllysine; alternate mark is found at Lys-221, Lys-231, and Lys-238. N6-succinyllysine; alternate is present on residues Lys-221, Lys-231, and Lys-238. Position 243 is an N6-acetyllysine (Lys-243). L-ornithine contacts are provided by Asp-263, Ser-267, and Met-268. N6-succinyllysine occurs at positions 274 and 289. Residue Lys-292 is modified to N6-acetyllysine; alternate. Lys-292 is subject to N6-succinyllysine; alternate. The Proton acceptor role is filled by Cys-303. 303 to 304 (CL) lines the carbamoyl phosphate pocket. Lys-307 carries the post-translational modification N6-acetyllysine; alternate. Residue Lys-307 is modified to N6-succinyllysine; alternate. Arg-330 contributes to the carbamoyl phosphate binding site.

It belongs to the aspartate/ornithine carbamoyltransferase superfamily. OTCase family. As to quaternary structure, homotrimer. Acetylation at Lys-88 negatively regulates ornithine carbamoyltransferase activity in response to nutrient signals. In terms of tissue distribution, mainly expressed in liver and intestinal mucosa.

It localises to the mitochondrion matrix. It carries out the reaction carbamoyl phosphate + L-ornithine = L-citrulline + phosphate + H(+). The protein operates within nitrogen metabolism; urea cycle; L-citrulline from L-ornithine and carbamoyl phosphate: step 1/1. With respect to regulation, negatively regulated by lysine acetylation. Functionally, catalyzes the second step of the urea cycle, the condensation of carbamoyl phosphate with L-ornithine to form L-citrulline. The urea cycle ensures the detoxification of ammonia by converting it to urea for excretion. This is Ornithine transcarbamylase, mitochondrial from Homo sapiens (Human).